We begin with the raw amino-acid sequence, 397 residues long: CCA-adding enzyme (397 aa).

Residues Gly-32 and Arg-35 each contribute to the ATP site. CTP contacts are provided by Gly-32 and Arg-35. 2 residues coordinate Mg(2+): Asp-45 and Asp-47. ATP contacts are provided by Arg-116, Asp-159, Arg-162, Arg-165, and Arg-168. The CTP site is built by Arg-116, Asp-159, Arg-162, Arg-165, and Arg-168.

Belongs to the tRNA nucleotidyltransferase/poly(A) polymerase family. Bacterial CCA-adding enzyme type 3 subfamily. As to quaternary structure, homodimer. It depends on Mg(2+) as a cofactor.

The catalysed reaction is a tRNA precursor + 2 CTP + ATP = a tRNA with a 3' CCA end + 3 diphosphate. The enzyme catalyses a tRNA with a 3' CCA end + 2 CTP + ATP = a tRNA with a 3' CCACCA end + 3 diphosphate. In terms of biological role, catalyzes the addition and repair of the essential 3'-terminal CCA sequence in tRNAs without using a nucleic acid template. Adds these three nucleotides in the order of C, C, and A to the tRNA nucleotide-73, using CTP and ATP as substrates and producing inorganic pyrophosphate. tRNA 3'-terminal CCA addition is required both for tRNA processing and repair. Also involved in tRNA surveillance by mediating tandem CCA addition to generate a CCACCA at the 3' terminus of unstable tRNAs. While stable tRNAs receive only 3'-terminal CCA, unstable tRNAs are marked with CCACCA and rapidly degraded. In Latilactobacillus sakei subsp. sakei (strain 23K) (Lactobacillus sakei subsp. sakei), this protein is CCA-adding enzyme.